We begin with the raw amino-acid sequence, 279 residues long: MKVISSIQELRDQLRGQNRTAFVPTMGNLHEGHLSLMRLARQHGDPVVASIFVNRLQFGPNEDFDKYPRTLQDDIEKLQKENVYVLFAPTERDMYPEPQEYRVLPPDDLGGILEGEFRPGFFAGVCTVVTKLMSCVQPRVAVFGKKDYQQLMIVRRMCQQLALPVDIIAAETVRDEDGLALSSRNRYLTTDERKEAPELAKTLQRVRDGVLGGERDLGKLEQTARAHLAERGWAPDYISIRRRANLIAPSAAELEAGEPLVVLAAAKLGATRLIDNLEI.

26-33 (MGNLHEGH) contributes to the ATP binding site. Histidine 33 (proton donor) is an active-site residue. Glutamine 57 contacts (R)-pantoate. Beta-alanine is bound at residue glutamine 57. 144 to 147 (GKKD) is an ATP binding site. Position 150 (glutamine 150) interacts with (R)-pantoate. ATP is bound by residues valine 173 and 181 to 184 (LSSR).

It belongs to the pantothenate synthetase family. As to quaternary structure, homodimer.

The protein localises to the cytoplasm. It carries out the reaction (R)-pantoate + beta-alanine + ATP = (R)-pantothenate + AMP + diphosphate + H(+). Its pathway is cofactor biosynthesis; (R)-pantothenate biosynthesis; (R)-pantothenate from (R)-pantoate and beta-alanine: step 1/1. Catalyzes the condensation of pantoate with beta-alanine in an ATP-dependent reaction via a pantoyl-adenylate intermediate. In Burkholderia ambifaria (strain ATCC BAA-244 / DSM 16087 / CCUG 44356 / LMG 19182 / AMMD) (Burkholderia cepacia (strain AMMD)), this protein is Pantothenate synthetase.